A 193-amino-acid polypeptide reads, in one-letter code: Peptidyl-tRNA hydrolase (193 aa).

Y14 is a tRNA binding site. The active-site Proton acceptor is the H19. The tRNA site is built by F64, N66, and N112.

The protein belongs to the PTH family. As to quaternary structure, monomer.

It is found in the cytoplasm. It carries out the reaction an N-acyl-L-alpha-aminoacyl-tRNA + H2O = an N-acyl-L-amino acid + a tRNA + H(+). Its function is as follows. Hydrolyzes ribosome-free peptidyl-tRNAs (with 1 or more amino acids incorporated), which drop off the ribosome during protein synthesis, or as a result of ribosome stalling. Catalyzes the release of premature peptidyl moieties from peptidyl-tRNA molecules trapped in stalled 50S ribosomal subunits, and thus maintains levels of free tRNAs and 50S ribosomes. The polypeptide is Peptidyl-tRNA hydrolase (Bartonella bacilliformis (strain ATCC 35685 / KC583 / Herrer 020/F12,63)).